The sequence spans 175 residues: uncharacterized protein (175 aa).

Residues 113–175 (AQLPRDSRGN…RTRSGGLERL (63 aa)) are disordered.

This is an uncharacterized protein from Bos taurus (Bovine).